A 460-amino-acid chain; its full sequence is Malonyl-coenzyme A:anthocyanin 3-O-glucoside-6''-O-malonyltransferase (460 aa).

Active-site proton acceptor residues include His173 and Asp400.

The protein belongs to the plant acyltransferase family.

It carries out the reaction an anthocyanidin 3-O-beta-D-glucoside + malonyl-CoA = an anthocyanidin 3-O-(6-O-malonyl-beta-D-glucoside) + CoA. Its activity is regulated as follows. Completely inhibited by 5 mM N-ethylmaleimide or 0.1 mM Cu(2+). Partially inhibited by 0.1 mM Fe(2+) or 0.1 mM Hg(2+). Functionally, catalyzes the transfer of the malonyl group from malonyl-CoA to pelargonidin 3-O-glucoside to produce pelargonidin 3-O-6''-O-malonylglucoside. Can also transfer the malonyl group from malonyl-CoA to cyanidin 3-O-glucoside, delphinidin 3-O-glucoside and quercetin 3-O-glucoside. This Dahlia pinnata (Pinnate dahlia) protein is Malonyl-coenzyme A:anthocyanin 3-O-glucoside-6''-O-malonyltransferase.